A 241-amino-acid polypeptide reads, in one-letter code: MKFFNYRRVPYAEIRAFSVHILTASGSFLAFLGVVAAAEHRFVDMFWWLGLALLVDGIDGPIARKVQVKEVLPNWSGDTLDNVIDYVTYVLLPAFALYQSGMIGEPWSFVAAGAIVVSSAIYYADMGMKTDEYFFSGFPVVWNMVVFTLFVIQASEVTASIVVFLSVILTFLPINFLHPVRVKRLRPLNLGIFLVWSVLGMYALLLHFETPPWVVVGVVATGLYLYVIGFILQIFPKLGRA.

At 1 to 15 the chain is on the cytoplasmic side; sequence MKFFNYRRVPYAEIR. The helical transmembrane segment at 16–36 threads the bilayer; the sequence is AFSVHILTASGSFLAFLGVVA. Over 37-41 the chain is Periplasmic; it reads AAEHR. A helical membrane pass occupies residues 42–62; that stretch reads FVDMFWWLGLALLVDGIDGPI. At 63–76 the chain is on the cytoplasmic side; that stretch reads ARKVQVKEVLPNWS. A helical transmembrane segment spans residues 77–97; that stretch reads GDTLDNVIDYVTYVLLPAFAL. At 98–100 the chain is on the periplasmic side; the sequence is YQS. The chain crosses the membrane as a helical span at residues 101-121; sequence GMIGEPWSFVAAGAIVVSSAI. Residues 122–133 lie on the Cytoplasmic side of the membrane; the sequence is YYADMGMKTDEY. The chain crosses the membrane as a helical span at residues 134–154; that stretch reads FFSGFPVVWNMVVFTLFVIQA. Topologically, residues 155-156 are periplasmic; that stretch reads SE. The helical transmembrane segment at 157–177 threads the bilayer; it reads VTASIVVFLSVILTFLPINFL. Over 178–187 the chain is Cytoplasmic; the sequence is HPVRVKRLRP. Residues 188–208 traverse the membrane as a helical segment; that stretch reads LNLGIFLVWSVLGMYALLLHF. Topologically, residues 209–211 are periplasmic; sequence ETP. Residues 212–232 traverse the membrane as a helical segment; the sequence is PWVVVGVVATGLYLYVIGFIL. Residues 233 to 241 are Cytoplasmic-facing; it reads QIFPKLGRA.

Belongs to the CDP-alcohol phosphatidyltransferase class-I family. The cofactor is Mn(2+).

The protein resides in the cell inner membrane. The enzyme catalyses a CDP-1,2-diacyl-sn-glycerol + choline = a 1,2-diacyl-sn-glycero-3-phosphocholine + CMP + H(+). With respect to regulation, activated by CDP-diacylglycerol especially in the presence of Triton X-100 (0.1% w/v) at concentrations where micelles are formed. Maximal activation by Triton X-100 at 0.2% w/v, but higher concentrations become inhibitory. Inhibited by EDTA and high concentrations of choline. Its function is as follows. Condenses choline with CDP-diglyceride to produce phosphatidylcholine and CMP. The protein is Phosphatidylcholine synthase (pcs) of Rhizobium meliloti (strain 1021) (Ensifer meliloti).